A 388-amino-acid polypeptide reads, in one-letter code: Lysocardiolipin acyltransferase 1 (388 aa).

The next 2 membrane-spanning stretches (helical) occupy residues 9–29 (FLLF…GPLL) and 46–66 (IVAT…GVKV). Positions 85 to 90 (HRTRLD) match the HXXXXD motif motif. 2 helical membrane passes run 321 to 341 (IILV…CASL) and 342 to 362 (CLCP…LCQQ).

Belongs to the 1-acyl-sn-glycerol-3-phosphate acyltransferase family.

The protein resides in the endoplasmic reticulum membrane. It carries out the reaction a 1-acyl-sn-glycero-3-phosphate + an acyl-CoA = a 1,2-diacyl-sn-glycero-3-phosphate + CoA. The catalysed reaction is a 1-acyl-sn-glycero-3-phospho-(1D-myo-inositol) + an acyl-CoA = a 1,2-diacyl-sn-glycero-3-phospho-(1D-myo-inositol) + CoA. It catalyses the reaction 1-acyl-sn-glycero-3-phospho-(1'-sn-glycerol) + an acyl-CoA = a 1,2-diacyl-sn-glycero-3-phospho-(1'-sn-glycerol) + CoA. The enzyme catalyses 1-hexadecanoyl-sn-glycero-3-phosphate + (9Z)-octadecenoyl-CoA = 1-hexadecanoyl-2-(9Z-octadecenoyl)-sn-glycero-3-phosphate + CoA. It carries out the reaction 1-(9Z-octadecenoyl)-sn-glycero-3-phosphate + (9Z)-octadecenoyl-CoA = 1,2-di-(9Z-octadecenoyl)-sn-glycero-3-phosphate + CoA. The catalysed reaction is 1-(9Z,12Z)-octadecadienoyl-sn-glycero-3-phosphate + (9Z)-octadecenoyl-CoA = 1-(9Z,12Z)-octadecadienoyl-2-(9Z)-octadecenoyl-sn-glycero-3-phosphate + CoA. It catalyses the reaction 1-(9Z,12Z,15Z)-octadecatrienoyl-sn-glycero-3-phosphate + (9Z)-octadecenoyl-CoA = 1-(9Z,12Z,15Z)-octadecatrienoyl-2-(9Z)-octadecenoyl-sn-glycero-3-phosphate + CoA. The enzyme catalyses 1-(9Z-octadecenoyl)-sn-glycero-3-phosphate + hexadecanoyl-CoA = 1-(9Z)-octadecenoyl-2-hexadecanoyl-sn-glycero-3-phosphate + CoA. It carries out the reaction 1-(9Z-octadecenoyl)-sn-glycero-3-phosphate + octadecanoyl-CoA = 1-(9Z-octadecenoyl)-2-octadecanoyl-sn-glycero-3-phosphate + CoA. The catalysed reaction is 1-acyl-sn-glycero-3-phospho-(1'-sn-glycerol) + (9Z)-octadecenoyl-CoA = 1-acyl-2-(9Z-octadecenoyl)-sn-glycero-3-phospho-(1'-sn-glycerol) + CoA. It catalyses the reaction a 1-acyl-sn-glycero-3-phospho-(1D-myo-inositol) + (9Z)-octadecenoyl-CoA = a 1-acyl-2-(9Z-octadecenoyl)-sn-glycero-3-phospho-(1D-myo-inositol) + CoA. The enzyme catalyses 1-hexadecanoyl-sn-glycero-3-phospho-(1D-myo-inositol) + hexadecanoyl-CoA = 1,2-dihexadecanoyl-sn-glycero-3-phospho-(1D-myo-inositol) + CoA. It carries out the reaction 1-hexadecanoyl-sn-glycero-3-phospho-(1D-myo-inositol) + octadecanoyl-CoA = 1-hexadecanoyl-2-octadecanoyl-sn-glycero-3-phospho-(1D-myo-inositol) + CoA. The catalysed reaction is 1-hexadecanoyl-sn-glycero-3-phospho-(1D-myo-inositol) + (9Z)-octadecenoyl-CoA = 1-hexadecanoyl-2-(9Z-octadecenoyl)-sn-glycero-3-phospho-(1D-myo-inositol) + CoA. It catalyses the reaction 1-hexadecanoyl-sn-glycero-3-phospho-(1D-myo-inositol) + (9Z,12Z)-octadecadienoyl-CoA = 1-hexadecanoyl-2-(9Z,12Z-octadecadienoyl)-sn-glycero-3-phospho-(1D-myo-inositol) + CoA. The enzyme catalyses 1-hexadecanoyl-sn-glycero-3-phospho-(1D-myo-inositol) + (5Z,8Z,11Z,14Z)-eicosatetraenoyl-CoA = 1-hexadecanoyl-2-(5Z,8Z,11Z,14Z-eicosatetraenoyl)-sn-glycero-3-phospho-D-myo-inositol + CoA. It carries out the reaction 1-hexadecanoyl-sn-glycero-3-phospho-(1'-sn-glycerol) + hexadecanoyl-CoA = 1,2-dihexadecanoyl-sn-glycero-3-phospho-(1'-sn-glycerol) + CoA. The catalysed reaction is 1-hexadecanoyl-sn-glycero-3-phospho-(1'-sn-glycerol) + octadecanoyl-CoA = 1-hexadecanoyl-2-octadecanoyl-sn-glycero-3-phospho-(1'-sn-glycerol) + CoA. It catalyses the reaction 1-hexadecanoyl-sn-glycero-3-phospho-(1'-sn-glycerol) + (9Z)-octadecenoyl-CoA = 1-hexadecanoyl-2-(9Z-octadecenoyl)-sn-glycero-3-phospho-(1'-sn-glycerol) + CoA. The enzyme catalyses 1-hexadecanoyl-sn-glycero-3-phospho-(1'-sn-glycerol) + (9Z,12Z)-octadecadienoyl-CoA = 1-hexadecanoyl-2-(9Z,12Z-octadecadienoyl)-sn-glycero-3-phospho-(1'-sn-glycerol) + CoA. It carries out the reaction 1-tetradecanoyl-sn-glycero-3-phospho-(1'-sn-glycerol) + (9Z)-octadecenoyl-CoA = 1-tetradecanoyl-2-(9Z-octadecenoyl)-sn-glycero-3-phospho-(1'-sn-glycerol) + CoA. The catalysed reaction is 1-octadecanoyl-sn-glycero-3-phospho-(1'-sn-glycerol) + (9Z)-octadecenoyl-CoA = 1-octadecanoyl-2-(9Z-octadecenoyl)-sn-glycero-3-phospho-(1'-sn-glycerol) + CoA. It catalyses the reaction 1-(9Z-octadecenoyl)-sn-glycero-3-phospho-(1'-sn-glycerol) + (9Z)-octadecenoyl-CoA = 1,2-di-(9Z-octadecenoyl)-sn-glycero-3-phospho-(1'-sn-glycerol) + CoA. The enzyme catalyses 1-hexadecanoyl-sn-glycero-3-phospho-(1D-myo-inositol) + dodecanoyl-CoA = 1-hexadecanoyl-2-dodecanoyl-sn-glycero-3-phospho-(1D-myo-inositol) + CoA. It carries out the reaction 1',3'-bis-[1-acyl-sn-glycero-3-phospho]-glycerol + (9Z)-octadecenoyl-CoA = 1'-[1-acyl-2-(9Z)-octadecenoyl-sn-glycero-3-phospho],3'-[1-acyl,2-hydroxy-sn-glycero-3-phospho]-glycerol + CoA. The catalysed reaction is 1'-[1,2-diacyl-sn-glycero-3-phospho],3'-[1-acyl-sn-glycero-3-phospho]-glycerol + (9Z)-octadecenoyl-CoA = 1'-[1,2-diacyl-sn-glycero-3-phospho],3'-[1-acyl,2-(9Z)-octadecenoyl-sn-glycero-3-phospho]-glycerol + CoA. It catalyses the reaction 1'-[1,2-diacyl-sn-glycero-3-phospho],3'-[1-acyl-sn-glycero-3-phospho]-glycerol + (9Z,12Z)-octadecadienoyl-CoA = 1'-[1,2-diacyl-sn-glycero-3-phospho],3'-[1-acyl,2-(9Z,12Z)-octadecadienoyl-sn-glycero-3-phospho]-glycerol + CoA. The enzyme catalyses 1'-[1,2-diacyl-sn-glycero-3-phospho],3'-[1-acyl-sn-glycero-3-phospho]-glycerol + dodecanoyl-CoA = 1'-[1,2-diacyl-sn-glycero-3-phospho],3'-[1-acyl,2-dodecanoyl-sn-glycero-3-phospho]-glycerol + CoA. It carries out the reaction 1',3'-bis-[1-acyl-sn-glycero-3-phospho]-glycerol + dodecanoyl-CoA = 1'-[1-acyl-2-dodecanoyl-sn-glycero-3-phospho],3'-[1-acyl,2-hydroxy-sn-glycero-3-phospho]-glycerol + CoA. The catalysed reaction is a 1-acyl-sn-glycero-3-phosphate + (9Z)-octadecenoyl-CoA = a 1-acyl-2-(9Z-octadecenoyl)-sn-glycero-3-phosphate + CoA. It catalyses the reaction 1',3'-bis-[1-acyl-sn-glycero-3-phospho]-glycerol + (9Z,12Z)-octadecadienoyl-CoA = 1'-[1-acyl-2-(9Z,12Z)-octadecadienoyl-sn-glycero-3-phospho],3'-[1-acyl,2-hydroxy-sn-glycero-3-phospho]-glycerol + CoA. The enzyme catalyses 1',3'-bis-[1-acyl-sn-glycero-3-phospho]-glycerol + hexadecanoyl-CoA = 1'-[1-acyl-2-hexadecanoyl-sn-glycero-3-phospho],3'-[1-acyl,2-hydroxy-sn-glycero-3-phospho]-glycerol + CoA. It carries out the reaction 1',3'-bis-[1-acyl-sn-glycero-3-phospho]-glycerol + octadecanoyl-CoA = 1'-[1-acyl-2-octadecanoyl-sn-glycero-3-phospho],3'-[1-acyl,2-hydroxy-sn-glycero-3-phospho]-glycerol + CoA. The catalysed reaction is 1'-[1,2-diacyl-sn-glycero-3-phospho],3'-[1-acyl-sn-glycero-3-phospho]-glycerol + octanoyl-CoA = 1'-[1,2-diacyl-sn-glycero-3-phospho],3'-[1-acyl,2-octanoyl-sn-glycero-3-phospho]-glycerol + CoA. It catalyses the reaction 1',3'-bis-[1-acyl-sn-glycero-3-phospho]-glycerol + octanoyl-CoA = 1'-[1-acyl-2-octanoyl-sn-glycero-3-phospho],3'-[1-acyl,2-hydroxy-sn-glycero-3-phospho]-glycerol + CoA. The enzyme catalyses 1'-[1,2-diacyl-sn-glycero-3-phospho],3'-[1-acyl-sn-glycero-3-phospho]-glycerol + hexadecanoyl-CoA = 1'-[1,2-diacyl-sn-glycero-3-phospho],3'-[1-acyl,2-hexadecanoyl-sn-glycero-3-phospho]-glycerol + CoA. It carries out the reaction 1'-[1,2-diacyl-sn-glycero-3-phospho],3'-[1-acyl-sn-glycero-3-phospho]-glycerol + (5Z,8Z,11Z,14Z)-eicosatetraenoyl-CoA = 1'-[1,2-diacyl-sn-glycero-3-phospho],3'-[1-acyl,2-(5Z,8Z,11Z,14Z)-eicosatetraenoyl-sn-glycero-3-phospho]-glycerol + CoA. The catalysed reaction is 1',3'-bis-[1-acyl-sn-glycero-3-phospho]-glycerol + (5Z,8Z,11Z,14Z)-eicosatetraenoyl-CoA = 1'-[1-acyl-2-(5Z,8Z,11Z,14Z)-eicosatetraenoyl-sn-glycero-3-phospho],3'-[1-acyl,2-hydroxy-sn-glycero-3-phospho]-glycerol + CoA. It catalyses the reaction a 1-acyl-sn-glycero-3-phospho-(1D-myo-inositol) + octadecanoyl-CoA = a 1-acyl-2-octadecanoyl-sn-glycero-3-phospho-(1D-myo-inositol) + CoA. The enzyme catalyses a 2-acyl-sn-glycero-3-phospho-D-myo-inositol + octadecanoyl-CoA = 1-octadecanoyl-2-acyl-sn-glycero-3-phospho-1D-myo-inositol + CoA. The protein operates within phospholipid metabolism; CDP-diacylglycerol biosynthesis; CDP-diacylglycerol from sn-glycerol 3-phosphate: step 2/3. Exhibits acyl-CoA:lysocardiolipin acyltransferase (ALCAT) activity; catalyzes the reacylation of lyso-cardiolipin to cardiolipin (CL), a key step in CL remodeling. Recognizes both monolysocardiolipin and dilysocardiolipin as substrates with a preference for linoleoyl-CoA and oleoyl-CoA as acyl donors. Also exhibits 1-acyl-sn-glycerol-3-phosphate acyltransferase activity (AGPAT) activity; converts 1-acyl-sn-glycerol-3- phosphate (lysophosphatidic acid or LPA) into 1,2-diacyl-sn-glycerol-3- phosphate (phosphatidic acid or PA) by incorporating an acyl moiety at the sn-2 position of the glycerol backbone. Possesses both lysophosphatidylinositol acyltransferase (LPIAT) and lysophosphatidylglycerol acyltransferase (LPGAT) activities. Required for establishment of the hematopoietic and endothelial lineages. This chain is Lysocardiolipin acyltransferase 1 (lclat1), found in Danio rerio (Zebrafish).